We begin with the raw amino-acid sequence, 518 residues long: ATP synthase subunit alpha (518 aa).

ATP is bound at residue 169 to 176 (GDRKTGKT).

The protein belongs to the ATPase alpha/beta chains family. F-type ATPases have 2 components, CF(1) - the catalytic core - and CF(0) - the membrane proton channel. CF(1) has five subunits: alpha(3), beta(3), gamma(1), delta(1), epsilon(1). CF(0) has three main subunits: a(1), b(2) and c(9-12). The alpha and beta chains form an alternating ring which encloses part of the gamma chain. CF(1) is attached to CF(0) by a central stalk formed by the gamma and epsilon chains, while a peripheral stalk is formed by the delta and b chains.

It localises to the cell membrane. It carries out the reaction ATP + H2O + 4 H(+)(in) = ADP + phosphate + 5 H(+)(out). Functionally, produces ATP from ADP in the presence of a proton gradient across the membrane. The alpha chain is a regulatory subunit. The sequence is that of ATP synthase subunit alpha from Enterococcus hirae (strain ATCC 9790 / DSM 20160 / JCM 8729 / LMG 6399 / NBRC 3181 / NCIMB 6459 / NCDO 1258 / NCTC 12367 / WDCM 00089 / R).